The chain runs to 632 residues: Epsin-3 (632 aa).

Positions 8, 11, 25, 30, 63, and 73 each coordinate a 1,2-diacyl-sn-glycero-3-phospho-(1D-myo-inositol-4,5-bisphosphate). In terms of domain architecture, ENTH spans 12 to 144; it reads NIVHNYSEAE…KDEERLRQER (133 aa). Positions 172-214 are disordered; sequence YGEDYSRSRGSPSSYNSSSSSPRYTSDLEQARPQTSGEEELQL. The segment covering 179 to 196 has biased composition (low complexity); the sequence is SRGSPSSYNSSSSSPRYT. 2 positions are modified to phosphoserine: S191 and S192. UIM domains lie at 209–228 and 236–255; these read EEEL…AEKP and DEDL…HEKE. Residues 257 to 296 form a disordered region; it reads RSWQGDGSPMANGAGAVVHHQRDREPEREERKEEEKLKTS. S264 bears the Phosphoserine mark. Basic and acidic residues predominate over residues 276 to 294; that stretch reads HQRDREPEREERKEEEKLK. 8 consecutive repeat copies span residues 321–323, 344–346, 371–373, 387–389, 404–406, 524–526, 537–539, and 629–631. Residues 321-406 are 5 X 3 AA repeats of [DE]-P-W; the sequence is DPWDIPGFRP…KLPSTGADPW (86 aa). 3 disordered regions span residues 326-501, 525-560, and 604-632; these read PGFR…SFLG, PFLT…PALG, and AFAP…NPFL. Polar residues predominate over residues 353–371; that stretch reads TVLSRSQPWDLTPMLSSSE. The segment at 524 to 631 is 3 X 3 AA repeats of N-P-F; it reads NPFLTGLSAP…PPPQTGTNPF (108 aa).

The protein belongs to the epsin family. Detected in migrating keratinocytes from wounded skin, but not in differentiating keratinocytes or in normal skin. Detected in chronic wounds, basal cell carcinoma and ulcerative colitis.

Its subcellular location is the cytoplasm. The protein localises to the perinuclear region. The protein resides in the cytoplasmic vesicle. It is found in the clathrin-coated vesicle. It localises to the nucleus. This is Epsin-3 (EPN3) from Homo sapiens (Human).